The primary structure comprises 172 residues: RNA pyrophosphohydrolase (172 aa).

Residues 6 to 149 (GYRLNVGIVI…KRDVYRRAMK (144 aa)) form the Nudix hydrolase domain. Positions 38–59 (GGIDEGETPEQAMYRELYEEVG) match the Nudix box motif.

The protein belongs to the Nudix hydrolase family. RppH subfamily. A divalent metal cation serves as cofactor.

Its function is as follows. Accelerates the degradation of transcripts by removing pyrophosphate from the 5'-end of triphosphorylated RNA, leading to a more labile monophosphorylated state that can stimulate subsequent ribonuclease cleavage. This chain is RNA pyrophosphohydrolase, found in Vibrio atlanticus (strain LGP32) (Vibrio splendidus (strain Mel32)).